The following is a 150-amino-acid chain: UPF0506 protein SJCHGC03047 (150 aa).

The first 18 residues, 1–18, serve as a signal peptide directing secretion; sequence MNTCIQLLILCLVTLTNS. N-linked (GlcNAc...) asparagine glycosylation is found at Asn-20, Asn-48, and Asn-110. 3 disulfide bridges follow: Cys-116/Cys-130, Cys-123/Cys-134, and Cys-129/Cys-139.

It belongs to the UPF0506 family.

Its subcellular location is the secreted. The protein is UPF0506 protein SJCHGC03047 of Schistosoma japonicum (Blood fluke).